The following is a 458-amino-acid chain: Tyrosine phenol-lyase (458 aa).

Lysine 258 is subject to N6-(pyridoxal phosphate)lysine.

It belongs to the beta-eliminating lyase family. As to quaternary structure, homotetramer. The cofactor is pyridoxal 5'-phosphate.

The catalysed reaction is L-tyrosine + H2O = phenol + pyruvate + NH4(+). In Symbiobacterium sp. (strain SC-1), this protein is Tyrosine phenol-lyase (tpl).